Consider the following 724-residue polypeptide: NAD(+) hydrolase SARM1 (724 aa).

The transit peptide at 1–27 (MVLTLLLSAYKLCRFFAMSGPRPGAER) directs the protein to the mitochondrion. The ARM 1 repeat unit spans residues 60-100 (EVQDALERALPELQQALSALKQAGGARAVGAGLAEVFQLVE). NAD(+)-binding positions include W103, R110, 149–157 (EQILVAENR), and 190–193 (HMFK). ARM repeat units follow at residues 114–153 (QGLC…QILV), 155–193 (ENRD…HMFK), 196–235 (EETC…NCAL), 237–280 (GGQA…LATN), 281–314 (KEVE…CLVD), 315–354 (ASDT…AEAA), and 359–402 (QGKT…EEVP). SAM domains are found at residues 412-476 (WKEA…LKTF) and 486-548 (NLAD…MLHS). Residues S548 and S558 each carry the phosphoserine modification. The region spanning 560–703 (DTPDVFISYR…KIIRFLQGRS (144 aa)) is the TIR domain. NAD(+)-binding positions include 569-570 (RR) and E599. E642 is an active-site residue. Positions 704 to 724 (SRDSSAGSDTSLEGAAPMGPT) are disordered.

This sequence belongs to the SARM1 family. In terms of assembly, homooctamer; forms an octameric ring via SAM domains. Interacts with TICAM1/TRIF and thereby interferes with TICAM1/TRIF function. Interacts with MAPK10/JNK3 and SDC2 (via cytoplasmic domain). Phosphorylation at Ser-548 by JNK kinases (MAPK8, MAPK9 and /or MAPK10) enhance the NAD(+) hydrolase (NADase) activity. Phosphorylation at Ser-548 and subsequent activation takes place in response to oxidative stress conditions and inhibits mitochondrial respiration. In terms of tissue distribution, predominantly expressed in brain, kidney and liver. Expressed at lower level in placenta.

Its subcellular location is the cytoplasm. The protein resides in the cell projection. It localises to the axon. The protein localises to the dendrite. It is found in the synapse. Its subcellular location is the mitochondrion. It catalyses the reaction NAD(+) + H2O = ADP-D-ribose + nicotinamide + H(+). The enzyme catalyses NAD(+) = cyclic ADP-beta-D-ribose + nicotinamide + H(+). The catalysed reaction is NADP(+) + H2O = ADP-D-ribose 2'-phosphate + nicotinamide + H(+). Autoinhibited: in the inactive state, the enzymatic TIR domain is held apart by the autoinhibiting ARM repeats. NAD(+)-binding to ARM repeats maintains an inactive state by promoting interaction between ARM repeats and the TIR domain, thereby facilitating inhibition of the enzymatic TIR domain. Following activation, possibly by nicotinamide mononucleotide (NMN), auto-inhibitory interactions are released, allowing self-association of the TIR domains and subsequent activation of the NAD(+) hydrolase (NADase) activity. Self-association of TIR domains is facilitated by the octamer of SAM domains. NAD(+) hydrolase activity is inhibited by nicotinamide. Specifically inhibited by berberine chloride and zinc chloride. Its function is as follows. NAD(+) hydrolase, which plays a key role in axonal degeneration following injury by regulating NAD(+) metabolism. Acts as a negative regulator of MYD88- and TRIF-dependent toll-like receptor signaling pathway by promoting Wallerian degeneration, an injury-induced form of programmed subcellular death which involves degeneration of an axon distal to the injury site. Wallerian degeneration is triggered by NAD(+) depletion: in response to injury, SARM1 is activated and catalyzes cleavage of NAD(+) into ADP-D-ribose (ADPR), cyclic ADPR (cADPR) and nicotinamide; NAD(+) cleavage promoting cytoskeletal degradation and axon destruction. Also able to hydrolyze NADP(+), but not other NAD(+)-related molecules. Can activate neuronal cell death in response to stress. Regulates dendritic arborization through the MAPK4-JNK pathway. Involved in innate immune response: inhibits both TICAM1/TRIF- and MYD88-dependent activation of JUN/AP-1, TRIF-dependent activation of NF-kappa-B and IRF3, and the phosphorylation of MAPK14/p38. The protein is NAD(+) hydrolase SARM1 of Homo sapiens (Human).